The sequence spans 375 residues: MSCPVIELTQQLIRRPSLSPDDVGCQALMIERLRKIGFTIEHMDFGDTQNFWAWRGRGETLAFAGHTDVVPAGDVDRWINPPFEPTIRDGMLFGRGAADMKGSLAAMVVAAERFVAQHPHHRGRLAFLITSDEEASAKNGTVKVVEALMARNERLDYCLVGEPSSTEIVGDVVKNGRRGSLTCNLTIHGVQGHVAYPHLADNPVHRAAPFLNELVAIEWDRGNDFFPATSMQIANIQAGTGSNNVIPGELFVQFNFRFSTELTDEMIKERVHALLEKHQLRYTVDWWLSGQPFLTARGKLVDAVVNAIEHYNEIKPQLLTTGGTSDGRFIARMGAQVVELGPVNATIHKINECVNAADLQLLARMYQRIMEQLVA.

Residue His66 participates in Zn(2+) binding. Asp68 is a catalytic residue. Asp99 is a binding site for Zn(2+). The active-site Proton acceptor is Glu133. Positions 134, 162, and 348 each coordinate Zn(2+).

It belongs to the peptidase M20A family. DapE subfamily. Homodimer. Zn(2+) is required as a cofactor. The cofactor is Co(2+).

The enzyme catalyses N-succinyl-(2S,6S)-2,6-diaminopimelate + H2O = (2S,6S)-2,6-diaminopimelate + succinate. The protein operates within amino-acid biosynthesis; L-lysine biosynthesis via DAP pathway; LL-2,6-diaminopimelate from (S)-tetrahydrodipicolinate (succinylase route): step 3/3. Functionally, catalyzes the hydrolysis of N-succinyl-L,L-diaminopimelic acid (SDAP), forming succinate and LL-2,6-diaminopimelate (DAP), an intermediate involved in the bacterial biosynthesis of lysine and meso-diaminopimelic acid, an essential component of bacterial cell walls. The chain is Succinyl-diaminopimelate desuccinylase from Salmonella typhi.